Consider the following 534-residue polypeptide: Probable alpha-galactosidase A (534 aa).

The N-terminal stretch at methionine 1–serine 25 is a signal peptide. A disulfide bridge links cysteine 47 with cysteine 79. Residues asparagine 50, asparagine 88, asparagine 94, and asparagine 124 are each glycosylated (N-linked (GlcNAc...) asparagine). An intrachain disulfide couples cysteine 127 to cysteine 157. Aspartate 155 (nucleophile) is an active-site residue. An N-linked (GlcNAc...) asparagine glycan is attached at asparagine 204. Aspartate 213 functions as the Proton donor in the catalytic mechanism. Residues cysteine 413–leucine 534 enclose the Ricin B-type lectin domain. An intrachain disulfide couples cysteine 430 to cysteine 443. The N-linked (GlcNAc...) asparagine glycan is linked to asparagine 444. Cysteine 468 and cysteine 481 are joined by a disulfide.

Belongs to the glycosyl hydrolase 27 family.

The protein resides in the secreted. The enzyme catalyses Hydrolysis of terminal, non-reducing alpha-D-galactose residues in alpha-D-galactosides, including galactose oligosaccharides, galactomannans and galactolipids.. In terms of biological role, hydrolyzes a variety of simple alpha-D-galactoside as well as more complex molecules such as oligosaccharides and polysaccharides. The chain is Probable alpha-galactosidase A (aglA) from Aspergillus flavus (strain ATCC 200026 / FGSC A1120 / IAM 13836 / NRRL 3357 / JCM 12722 / SRRC 167).